We begin with the raw amino-acid sequence, 314 residues long: Thymidylate synthase (314 aa).

DUMP-binding positions include Arg-21 and 176 to 177 (RR). Cys-196 functions as the Nucleophile in the catalytic mechanism. DUMP-binding positions include 216-219 (RSAD), Asn-227, and 257-259 (HLY). A (6R)-5,10-methylene-5,6,7,8-tetrahydrofolate-binding site is contributed by Asp-219. A (6R)-5,10-methylene-5,6,7,8-tetrahydrofolate-binding site is contributed by Ser-313.

It belongs to the thymidylate synthase family. Bacterial-type ThyA subfamily. As to quaternary structure, homodimer.

The protein localises to the cytoplasm. The catalysed reaction is dUMP + (6R)-5,10-methylene-5,6,7,8-tetrahydrofolate = 7,8-dihydrofolate + dTMP. The protein operates within pyrimidine metabolism; dTTP biosynthesis. In terms of biological role, catalyzes the reductive methylation of 2'-deoxyuridine-5'-monophosphate (dUMP) to 2'-deoxythymidine-5'-monophosphate (dTMP) while utilizing 5,10-methylenetetrahydrofolate (mTHF) as the methyl donor and reductant in the reaction, yielding dihydrofolate (DHF) as a by-product. This enzymatic reaction provides an intracellular de novo source of dTMP, an essential precursor for DNA biosynthesis. This Listeria monocytogenes serotype 4b (strain F2365) protein is Thymidylate synthase.